A 910-amino-acid polypeptide reads, in one-letter code: DNA mismatch repair protein MutS (910 aa).

607–614 (GPNMAGKS) contributes to the ATP binding site.

It belongs to the DNA mismatch repair MutS family.

In terms of biological role, this protein is involved in the repair of mismatches in DNA. It is possible that it carries out the mismatch recognition step. This protein has a weak ATPase activity. In Geobacillus thermodenitrificans (strain NG80-2), this protein is DNA mismatch repair protein MutS.